The following is a 401-amino-acid chain: ATP phosphoribosyltransferase regulatory subunit (401 aa).

It belongs to the class-II aminoacyl-tRNA synthetase family. HisZ subfamily. Heteromultimer composed of HisG and HisZ subunits.

It is found in the cytoplasm. It functions in the pathway amino-acid biosynthesis; L-histidine biosynthesis; L-histidine from 5-phospho-alpha-D-ribose 1-diphosphate: step 1/9. Required for the first step of histidine biosynthesis. May allow the feedback regulation of ATP phosphoribosyltransferase activity by histidine. In Cyanothece sp. (strain PCC 7425 / ATCC 29141), this protein is ATP phosphoribosyltransferase regulatory subunit.